Here is a 445-residue protein sequence, read N- to C-terminus: GRAM domain-containing protein 2B (445 aa).

M1 carries the N-acetylmethionine modification. Positions 1–10 (MVKKPISSSD) are enriched in polar residues. The disordered stretch occupies residues 1–119 (MVKKPISSSD…RKKSSSSSQY (119 aa)). Residues 18–37 (PSSPKSSAGASHSSTDSPSS) show a composition bias toward low complexity. Composition is skewed to polar residues over residues 56-68 (KSPT…SSVE) and 82-93 (SKSSFDGSNLLS). Over residues 94–112 (DKNDCKTESKADSKTERKK) the composition is skewed to basic and acidic residues. A GRAM domain is found at 123–190 (MHFHKLFLDV…FSVTLIKKTK (68 aa)). A phosphoserine mark is found at S238, S255, and S265. The segment at 277–331 (DLEGYSSSGSQTPESENSRDFHVTESQTVLNVTKGETKPPRTDAHGSRAPDGKAK) is disordered. A compositionally biased stretch (polar residues) spans 281–291 (YSSSGSQTPES). Residues 311–330 (GETKPPRTDAHGSRAPDGKA) show a composition bias toward basic and acidic residues.

The sequence is that of GRAM domain-containing protein 2B (Gramd2b) from Rattus norvegicus (Rat).